A 134-amino-acid chain; its full sequence is Profilin (134 aa).

This sequence belongs to the profilin family. In terms of assembly, occurs in many kinds of cells as a complex with monomeric actin in a 1:1 ratio.

The protein localises to the cytoplasm. It localises to the cytoskeleton. Functionally, binds to actin and affects the structure of the cytoskeleton. At high concentrations, profilin prevents the polymerization of actin, whereas it enhances it at low concentrations. By binding to PIP2, it inhibits the formation of IP3 and DG. The sequence is that of Profilin from Daucus carota (Wild carrot).